Here is a 339-residue protein sequence, read N- to C-terminus: Dihydroorotase (339 aa).

The Zn(2+) site is built by histidine 12 and histidine 14. Substrate-binding positions include 14 to 16 (HVR) and asparagine 40. 4 residues coordinate Zn(2+): lysine 94, histidine 133, histidine 167, and aspartate 239. Lysine 94 carries the post-translational modification N6-carboxylysine. Histidine 133 provides a ligand contact to substrate. Residue aspartate 239 is part of the active site. Residues histidine 243 and alanine 255 each coordinate substrate.

The protein belongs to the metallo-dependent hydrolases superfamily. DHOase family. Class II DHOase subfamily. As to quaternary structure, homodimer. Requires Zn(2+) as cofactor.

The enzyme catalyses (S)-dihydroorotate + H2O = N-carbamoyl-L-aspartate + H(+). Its pathway is pyrimidine metabolism; UMP biosynthesis via de novo pathway; (S)-dihydroorotate from bicarbonate: step 3/3. Functionally, catalyzes the reversible cyclization of carbamoyl aspartate to dihydroorotate. The chain is Dihydroorotase from Helicobacter pylori (strain P12).